We begin with the raw amino-acid sequence, 778 residues long: DISP complex protein LRCH3 (778 aa).

LRR repeat units lie at residues 56–79 (AAVTGVLSLSGRKLREFPRGAANH), 81–104 (LTDTTRADLSRNRLSEIPMEACHF), 105–127 (VSLESLNLYQNCIRYIPEAVLNL), 128–150 (QALTFLNISRNQLSTLPVHLCNL), 152–172 (LKVLIASNNKLVSLPEEIGHL), 173–195 (RHLTELDVSCNEIQTVPSQIGNL), 197–218 (ALRDFNVRRNHLLRLPEELAEV), 220–239 (LIRLDFSCNKITVIPVCYRN), 240–264 (LRHLQVITLDNNPLQSPPAQICIKG), and 266–290 (IHIFKYLNIQACKIAPDLPDYERRP). Positions 56–290 (AAVTGVLSLS…PDLPDYERRP (235 aa)) are mediates interaction with DOCK7. Phosphoserine is present on residues S324, S415, and S419. Residues 382-642 (TTEEEENDVK…PATDPTDAIT (261 aa)) form a mediates direct interaction with MYO6 region. Residues 511–536 (QKASHNPQRQQPPGNGECSFPSRRSQ) are disordered. The segment covering 514 to 523 (SHNPQRQQPP) has biased composition (polar residues). S608 and S625 each carry phosphoserine. The Calponin-homology (CH) domain maps to 645–758 (REEELKLIDQ…VTVQALLELA (114 aa)). Residues 758-778 (APPKQPPPQQPQQQQPQLSAV) are disordered. The segment covering 768–778 (PQQQQPQLSAV) has biased composition (low complexity).

Component of the DOCK7-induced septin displacement/DISP complex, at least composed of DOCK7, LRCH3 and MYO6.

Its subcellular location is the cytoplasm. Functionally, as part of the DISP complex, may regulate the association of septins with actin and thereby regulate the actin cytoskeleton. The polypeptide is DISP complex protein LRCH3 (Mus musculus (Mouse)).